The sequence spans 570 residues: Peptidyl-prolyl cis-trans isomerase FKBP9 (570 aa).

A signal peptide spans 1-24 (MALGARGWRRRSLLLLLLWVTGQA). 4 PPIase FKBP-type domains span residues 54–142 (GDFV…VDIW), 166–254 (SDFV…LDLH), 278–365 (GDFL…IDFH), and 389–477 (GDYL…LELV). Asn174, Asn286, Asn302, and Asn397 each carry an N-linked (GlcNAc...) asparagine glycan. EF-hand domains follow at residues 488–523 (WNGEVSPNLFEEIDRDGNGEVLLEEFSEYIHAQVAT) and 533–568 (NAEMIVKNMFTNQDRNGDGKVTAEEFKLKDQEAKHD). Ca(2+)-binding residues include Asp501, Asp503, Asn505, Glu507, Glu512, Asp546, Asn548, Asp550, Lys552, and Glu557. A Prevents secretion from ER motif is present at residues 567–570 (HDEL).

Post-translationally, phosphorylated. Predominantly expressed in heart, skeletal muscle, lung, liver and kidney. Lower levels found in brain, spleen and testis.

It localises to the endoplasmic reticulum lumen. The enzyme catalyses [protein]-peptidylproline (omega=180) = [protein]-peptidylproline (omega=0). Its activity is regulated as follows. Inhibited by FK506. PPIases accelerate the folding of proteins during protein synthesis. The protein is Peptidyl-prolyl cis-trans isomerase FKBP9 (Fkbp9) of Mus musculus (Mouse).